Reading from the N-terminus, the 535-residue chain is Berberine bridge enzyme-like 27 (535 aa).

The first 22 residues, 1 to 22, serve as a signal peptide directing secretion; sequence MEILRFLLSLFIYFLLLNLSLS. N18 and N66 each carry an N-linked (GlcNAc...) asparagine glycan. Residues C40 and C100 are joined by a disulfide bond. In terms of domain architecture, FAD-binding PCMH-type spans 78–253; it reads ETPKPVSIIT…LSWKIRLLDV (176 aa). Pros-8alpha-FAD histidine is present on H115. 3 N-linked (GlcNAc...) asparagine glycosylation sites follow: N146, N215, and N439.

This sequence belongs to the oxygen-dependent FAD-linked oxidoreductase family. Requires FAD as cofactor. Accumulates in cell walls of etiolated hypocotyls.

Its subcellular location is the secreted. It is found in the cell wall. This is Berberine bridge enzyme-like 27 from Arabidopsis thaliana (Mouse-ear cress).